Here is a 513-residue protein sequence, read N- to C-terminus: ATP synthase subunit alpha (513 aa).

An ATP-binding site is contributed by 169–176 (GDRQTGKS).

This sequence belongs to the ATPase alpha/beta chains family. As to quaternary structure, F-type ATPases have 2 components, CF(1) - the catalytic core - and CF(0) - the membrane proton channel. CF(1) has five subunits: alpha(3), beta(3), gamma(1), delta(1), epsilon(1). CF(0) has three main subunits: a(1), b(2) and c(9-12). The alpha and beta chains form an alternating ring which encloses part of the gamma chain. CF(1) is attached to CF(0) by a central stalk formed by the gamma and epsilon chains, while a peripheral stalk is formed by the delta and b chains.

The protein resides in the cell inner membrane. The catalysed reaction is ATP + H2O + 4 H(+)(in) = ADP + phosphate + 5 H(+)(out). Its function is as follows. Produces ATP from ADP in the presence of a proton gradient across the membrane. The alpha chain is a regulatory subunit. This is ATP synthase subunit alpha from Blochmanniella floridana.